A 192-amino-acid polypeptide reads, in one-letter code: Probable metallophosphoesterase MJ0623 (192 aa).

A divalent metal cation is bound by residues Asp41, His43, Asp70, Asn92, His115, His144, and His146.

This sequence belongs to the metallophosphoesterase superfamily. YfcE family. Requires a divalent metal cation as cofactor.

The chain is Probable metallophosphoesterase MJ0623 from Methanocaldococcus jannaschii (strain ATCC 43067 / DSM 2661 / JAL-1 / JCM 10045 / NBRC 100440) (Methanococcus jannaschii).